Reading from the N-terminus, the 265-residue chain is Methylthioribulose-1-phosphate dehydratase (265 aa).

Cys-118 provides a ligand contact to substrate. 2 residues coordinate Zn(2+): His-136 and His-138. Glu-161 acts as the Proton donor/acceptor in catalysis. Residue His-226 participates in Zn(2+) binding.

The protein belongs to the aldolase class II family. MtnB subfamily. It depends on Zn(2+) as a cofactor.

Its subcellular location is the cytoplasm. It catalyses the reaction 5-(methylsulfanyl)-D-ribulose 1-phosphate = 5-methylsulfanyl-2,3-dioxopentyl phosphate + H2O. The protein operates within amino-acid biosynthesis; L-methionine biosynthesis via salvage pathway; L-methionine from S-methyl-5-thio-alpha-D-ribose 1-phosphate: step 2/6. Functionally, catalyzes the dehydration of methylthioribulose-1-phosphate (MTRu-1-P) into 2,3-diketo-5-methylthiopentyl-1-phosphate (DK-MTP-1-P). In Scheffersomyces stipitis (strain ATCC 58785 / CBS 6054 / NBRC 10063 / NRRL Y-11545) (Yeast), this protein is Methylthioribulose-1-phosphate dehydratase.